A 130-amino-acid polypeptide reads, in one-letter code: Small ribosomal subunit protein uS11 (130 aa).

It belongs to the universal ribosomal protein uS11 family. Part of the 30S ribosomal subunit. Interacts with proteins S7 and S18. Binds to IF-3.

Its function is as follows. Located on the platform of the 30S subunit, it bridges several disparate RNA helices of the 16S rRNA. Forms part of the Shine-Dalgarno cleft in the 70S ribosome. The protein is Small ribosomal subunit protein uS11 of Xylella fastidiosa (strain M12).